We begin with the raw amino-acid sequence, 485 residues long: NADH-quinone oxidoreductase subunit N (485 aa).

The next 14 membrane-spanning stretches (helical) occupy residues Ile-10–Leu-30, Ile-40–Ile-60, Val-71–Val-91, Gly-107–His-127, Leu-129–Ile-149, Phe-164–Met-184, Phe-209–Pro-229, Ile-248–Gly-268, Trp-276–Leu-296, Leu-304–Pro-324, Val-336–Gly-356, Ala-377–Ile-397, Gly-410–Val-430, and Leu-454–Leu-474.

It belongs to the complex I subunit 2 family. As to quaternary structure, NDH-1 is composed of 14 different subunits. Subunits NuoA, H, J, K, L, M, N constitute the membrane sector of the complex.

It is found in the cell inner membrane. It catalyses the reaction a quinone + NADH + 5 H(+)(in) = a quinol + NAD(+) + 4 H(+)(out). In terms of biological role, NDH-1 shuttles electrons from NADH, via FMN and iron-sulfur (Fe-S) centers, to quinones in the respiratory chain. The immediate electron acceptor for the enzyme in this species is believed to be ubiquinone. Couples the redox reaction to proton translocation (for every two electrons transferred, four hydrogen ions are translocated across the cytoplasmic membrane), and thus conserves the redox energy in a proton gradient. This chain is NADH-quinone oxidoreductase subunit N, found in Francisella tularensis subsp. holarctica (strain FTNF002-00 / FTA).